Consider the following 6306-residue polypeptide: Adhesion G-protein coupled receptor V1 (6306 aa).

The signal sequence occupies residues 1-29 (MSVFLGPGMPSASLLVNLLSALLILFVFG). Calx-beta domains are found at residues 30–117 (ETEI…FHLT), 133–237 (VTVT…IQLK), 262–362 (PVRF…HIML), 388–488 (KPYG…LQIL), 645–745 (PAIA…TLSL), 763–861 (DLII…VVLS), 876–979 (VNIT…VILL), 993–1093 (ATLR…IILL), 1108–1208 (TVII…LKLV), 1444–1544 (AMPR…FILK), 1564–1665 (TIQK…RVTL), 1710–1809 (TGLP…VELL), 1850–1952 (ILVT…VSVL), 1966–2079 (TLTV…IELL), 2107–2206 (QLII…VQLM), 2222–2324 (VIII…VQLT), 2441–2541 (TLCL…FLIS), 2584–2676 (NISP…VSLV), 2689–2789 (DTVR…QVIL), 2814–2925 (LTVE…VNLT), 2947–3048 (TAQV…LILT), and 3063–3172 (LIIV…CTLF). The Extracellular portion of the chain corresponds to 30 to 5908 (ETEIRFTGQT…TDNLSSYNEA (5879 aa)). EAR repeat units lie at residues 3255-3296 (VFSV…RWQG), 3297-3345 (IFIP…TFTS), 3348-3393 (KLFL…RWNG), 3395-3439 (SFVL…RWSG), 3441-3488 (GFIN…IWEM), and 3492-3534 (SFRY…CWNS). Calx-beta domains lie at 3525–3625 (DMSA…KVQL), 3639–3739 (SVTI…IVTL), 3775–3875 (GLVG…VTIT), 3899–4006 (AEIM…ISLI), 4020–4123 (VTVV…IQLI), 4139–4239 (IIIR…EFQL), 4255–4354 (ANIT…LTIT), 4387–4489 (RIII…ILLT), 4512–4612 (SPFG…IIKL), 4634–4734 (EFGD…VIQL), 4992–5095 (SGFI…INLT), 5288–5332 (AVEE…YVFL), and 5368–5468 (IGFS…FVEL). The GAIN-B domain maps to 5747 to 5903 (SILALHWYPQ…AVYARTDNLS (157 aa)). Disulfide bonds link Cys-5856-Cys-5885 and Cys-5873-Cys-5887. The tract at residues 5856-5903 (CLLWNQAAASWLSDSQFCKVVEETADYVECACSHMSVYAVYARTDNLS) is GPS. The chain crosses the membrane as a helical span at residues 5909–5929 (FFTSGFICISGLCLAVLSHIF). At 5930–5939 (CARYSMFAAK) the chain is on the cytoplasmic side. The helical transmembrane segment at 5940–5960 (LLTHMMAASLGTQILFLASAY) threads the bilayer. At 5961–5979 (ASPQLAEESCSAMAAVTHY) the chain is on the extracellular side. The helical transmembrane segment at 5980-6000 (LYLCQFSWMLIQSVNFWYVLV) threads the bilayer. Residues 6001–6010 (MNDEHTERRY) are Cytoplasmic-facing. The chain crosses the membrane as a helical span at residues 6011 to 6031 (LLFFLLSWGLPAFVVILLIVI). Topologically, residues 6032–6059 (LKGIYHQSMSQIYGLIHGDLCFIPNVYA) are extracellular. A helical transmembrane segment spans residues 6060–6080 (ALFTAALVPLTCLVVVFVVFI). Topologically, residues 6081–6104 (HAYQVKPQWKAYDDVFRGRTNAAE) are cytoplasmic. The helical transmembrane segment at 6105 to 6125 (IPLILYLFALISVTWLWGGLH) threads the bilayer. Residues 6126–6133 (MAYRHFWM) are Extracellular-facing. A helical membrane pass occupies residues 6134-6154 (LVLFVIFNSLQGLYVFMVYFI). Residues 6155–6306 (LHNQMCCPMK…RRIPIADTHL (152 aa)) lie on the Cytoplasmic side of the membrane. A disordered region spans residues 6216–6248 (ASFQQGSQASPDLKPSPQNGATFPSSGGYGQGS). Over residues 6217–6240 (SFQQGSQASPDLKPSPQNGATFPS) the composition is skewed to polar residues.

The protein belongs to the G-protein coupled receptor 2 family. Adhesion G-protein coupled receptor (ADGR) subfamily. As to quaternary structure, forms a heterodimer, consisting of a large extracellular region (alpha subunit) non-covalently linked to a seven-transmembrane moiety (beta subunit). Component of USH2 complex, composed of ADGRV1, PDZD7, USH2A and WHRN. Interacts with USH2A and WHRN. Interacts (via the cytoplasmic region) with PDZD7. Interacts (via the cytoplasmic region) with MYO7A (via MyTH4-FERM domains). Post-translationally, autoproteolytically cleaved into 2 subunits, an extracellular alpha subunit and a seven-transmembrane subunit. As to expression, expressed at low levels in adult tissues.

Its subcellular location is the cell membrane. The protein localises to the cell projection. It is found in the stereocilium membrane. It localises to the photoreceptor inner segment. Its function is as follows. G-protein coupled receptor which has an essential role in the development of hearing and vision. Couples to G-alpha(i)-proteins, GNAI1/2/3, G-alpha(q)-proteins, GNAQ, as well as G-alpha(s)-proteins, GNAS, inhibiting adenylate cyclase (AC) activity and cAMP production. Required for the hair bundle ankle formation, which connects growing stereocilia in developing cochlear hair cells of the inner ear. In response to extracellular calcium, activates kinases PKA and PKC to regulate myelination by inhibiting the ubiquitination of MAG, thus enhancing the stability of this protein in myelin-forming cells of the auditory pathway. In retina photoreceptors, the USH2 complex is required for the maintenance of periciliary membrane complex that seems to play a role in regulating intracellular protein transport. Involved in the regulation of bone metabolism. Functionally, cleaved ADGRV1 beta-subunit couples with G-alpha(i)-proteins, GNAI1/2/3, and constitutively inhibits adenylate cyclase (AC) activity with a stronger effect than full ADGRV1. In Homo sapiens (Human), this protein is Adhesion G-protein coupled receptor V1.